The following is a 238-amino-acid chain: Glutamine amidotransferase-like protein chyE (238 aa).

In terms of domain architecture, Glutamine amidotransferase type-1 spans 8-238 (KIAVLINTPP…LERVLQWLSE (231 aa)). Cys-102 serves as the catalytic Nucleophile. Residues His-189 and Glu-191 contribute to the active site.

This sequence belongs to the peptidase C26 family.

It participates in pigment biosynthesis. In terms of biological role, glutamine amidotransferase-like protein; part of the gene cluster that mediates the biosynthesis of the yellow pigment chrysogine. the NRPS chyA mediates the condensation of anthranilic acid and alanine into the intermediate 2-(2-aminopropanamido)benzoic acid. The remainder of the pathway is highly branched yielding at least 13 chrysogine-related compounds. The malonyl transferase chyE converts 2-(2-aminopropanamido)benzoic acid and 2-(2-aminopropanamido)benzamidine into 2-(2-(2-carboxyacetamido)propanamido)benzoic acid and 3-((1-((2-carbamoylphenyl)amino)-1-oxopropan-2-yl)amino)-3-oxopropanoic acid, respectively. ChyD is an amidase, being responsible for the amidation of the carboxylic acid moiety of 2-(2-aminopropanamido)benzoic acid, 2-(2-(2-carboxyacetamido)propanamido)benzoic acid and 2-(2-((4-amino-1-carboxy-4-oxobutyl)amino)propanamido)benzoic acid. ChyC is involved in the same reactions as ChyD, but plays a more minor role in the amidation reactions compared to chyD. The oxidoreductases chyH and chyM are involved in oxidation reactions that form N-pyruvoylanthranilamide from 2-(2-aminopropanamido)benzamidine and (1-((2-carbamoylphenyl)amino)-1-oxopropan-2-yl)glutamine, respectively. N-pyruvoylanthranilamide is further converted via two further branches in the pathway, yielding chrysogine and additional chrysogine-related coumpounds. Chrysogine is likely formed by a spontaneous ring closure from N-pyruvoylanthranilamide. This chain is Glutamine amidotransferase-like protein chyE, found in Penicillium rubens (strain ATCC 28089 / DSM 1075 / NRRL 1951 / Wisconsin 54-1255) (Penicillium chrysogenum).